The chain runs to 146 residues: ATP synthase epsilon chain (146 aa).

Positions 103–122 are disordered; it reads SAKKRAEQHMQEAKEKHNER.

Belongs to the ATPase epsilon chain family. As to quaternary structure, F-type ATPases have 2 components, CF(1) - the catalytic core - and CF(0) - the membrane proton channel. CF(1) has five subunits: alpha(3), beta(3), gamma(1), delta(1), epsilon(1). CF(0) has three main subunits: a, b and c.

The protein localises to the cell membrane. Functionally, produces ATP from ADP in the presence of a proton gradient across the membrane. The sequence is that of ATP synthase epsilon chain from Lactobacillus johnsonii (strain CNCM I-12250 / La1 / NCC 533).